The following is a 5381-amino-acid chain: Protein purity of essence (5381 aa).

Disordered regions lie at residues 140–174, 339–364, 599–621, 683–709, 1162–1212, and 1632–1659; these read KHPE…PKLE, QQQT…TSKD, SPET…QKSA, RNDS…SSGS, SGGD…STET, and QAAQ…QSER. The span at 339–350 shows a compositional bias: low complexity; sequence QQQTAAAASTSQ. Low complexity-rich tracts occupy residues 690–709 and 1167–1176; these read SPPS…SSGS and SSCTSAASSS. Residues 1632 to 1646 show a composition bias toward polar residues; sequence QAAQPNPSEESSQAC. Over residues 1647-1658 the composition is skewed to basic and acidic residues; the sequence is DHSEGGEQRQSE. Residues 1815 to 1884 form a UBR-type zinc finger; the sequence is KLCTFSQTQK…EDGSCQALSR (70 aa). Disordered stretches follow at residues 1917–1939, 2443–2479, 2632–2652, 3037–3143, 3537–3562, and 4247–4280; these read KRSN…KDSI, KNTT…KQLT, PDDS…TATQ, VSAG…DNNE, KQQQ…DREK, and HHQQ…KEAA. Composition is skewed to polar residues over residues 1920-1930, 2470-2479, 2643-2652, and 3048-3058; these read NTAPGATQQQH, SSQQHQKQLT, SGPTPVTATQ, and NVATDGSTLRT. Positions 3065–3075 are enriched in gly residues; the sequence is GSGGSESGGSG. The segment covering 3084 to 3104 has biased composition (polar residues); that stretch reads ARSSNFGDHPNTTPPRQSCSS. Positions 3119-3132 are enriched in gly residues; the sequence is SGSGGSASVPGGGL. Residues 4904-5374 are UBR4 E3 catalytic module; sequence PSLKYILRFL…SFIEDLLASL (471 aa). The segment at 5022-5136 adopts a HemiRING-type zinc-finger fold; sequence GLTCFICREG…SSYMQESTQR (115 aa). The Zn(2+) site is built by Cys5025, Cys5028, His5074, and Cys5077. The 236-residue stretch at 5139 to 5374 folds into the UZI domain; the sequence is ISYTSSIHDL…SFIEDLLASL (236 aa).

This sequence belongs to the UBR4 family.

Has a role in growth of the perineurial glial layer of the larval peripheral nerve. May have a role in male fertility and eye development or function. May bind calmodulin. The polypeptide is Protein purity of essence (Drosophila pseudoobscura pseudoobscura (Fruit fly)).